An 86-amino-acid polypeptide reads, in one-letter code: uncharacterized protein (86 aa).

To B.subtilis spore coat protein C.

This is an uncharacterized protein from Bacillus subtilis (strain 168).